The primary structure comprises 445 residues: Probable phosphoglucosamine mutase (445 aa).

Catalysis depends on Ser-99, which acts as the Phosphoserine intermediate. Mg(2+)-binding residues include Ser-99, Asp-238, Asp-240, and Asp-242. Position 99 is a phosphoserine (Ser-99).

The protein belongs to the phosphohexose mutase family. It depends on Mg(2+) as a cofactor. Activated by phosphorylation.

It carries out the reaction alpha-D-glucosamine 1-phosphate = D-glucosamine 6-phosphate. Its function is as follows. Catalyzes the conversion of glucosamine-6-phosphate to glucosamine-1-phosphate. The chain is Probable phosphoglucosamine mutase from Methanobrevibacter smithii (strain ATCC 35061 / DSM 861 / OCM 144 / PS).